The sequence spans 290 residues: Iron-sulfur cluster carrier protein (290 aa).

47–54 is a binding site for ATP; that stretch reads GKGGVGKS.

Belongs to the Mrp/NBP35 ATP-binding proteins family. In terms of assembly, homodimer.

Functionally, binds and transfers iron-sulfur (Fe-S) clusters to target apoproteins. Can hydrolyze ATP. The protein is Iron-sulfur cluster carrier protein of Methanocaldococcus jannaschii (strain ATCC 43067 / DSM 2661 / JAL-1 / JCM 10045 / NBRC 100440) (Methanococcus jannaschii).